Here is a 173-residue protein sequence, read N- to C-terminus: uncharacterized protein (173 aa).

This sequence belongs to the ycf73 family.

The protein resides in the plastid. It localises to the chloroplast. This is an uncharacterized protein from Saccharum hybrid (Sugarcane).